Here is a 332-residue protein sequence, read N- to C-terminus: L-lactate dehydrogenase A chain (332 aa).

At A2 the chain carries N-acetylalanine. N6-acetyllysine; alternate is present on K5. An N6-succinyllysine; alternate modification is found at K5. An N6-acetyllysine modification is found at K14. Phosphothreonine is present on T18. 29–57 serves as a coordination point for NAD(+); the sequence is GAVGMACAISILMKDLADELALVDVIEDK. Residue K57 is modified to N6-acetyllysine; alternate. A Glycyl lysine isopeptide (Lys-Gly) (interchain with G-Cter in SUMO2); alternate cross-link involves residue K57. K81 carries the N6-acetyllysine modification. R99 contributes to the NAD(+) binding site. R106 contributes to the substrate binding site. The residue at position 118 (K118) is an N6-acetyllysine; alternate. K118 carries the N6-succinyllysine; alternate modification. K126 is modified (N6-acetyllysine). N138 lines the NAD(+) pocket. Positions 138 and 169 each coordinate substrate. H193 serves as the catalytic Proton acceptor. Residues K224 and K232 each carry the N6-acetyllysine modification. Y239 is subject to Phosphotyrosine. K243 carries the N6-acetyllysine modification. Residue T248 coordinates substrate. T309 carries the phosphothreonine modification. N6-acetyllysine; alternate is present on K318. N6-succinyllysine; alternate is present on K318. At T322 the chain carries Phosphothreonine.

Belongs to the LDH/MDH superfamily. LDH family. As to quaternary structure, homotetramer. Interacts with PTEN upstream reading frame protein MP31. ISGylated.

Its subcellular location is the cytoplasm. The enzyme catalyses (S)-lactate + NAD(+) = pyruvate + NADH + H(+). The protein operates within fermentation; pyruvate fermentation to lactate; (S)-lactate from pyruvate: step 1/1. Interconverts simultaneously and stereospecifically pyruvate and lactate with concomitant interconversion of NADH and NAD(+). In Macaca fascicularis (Crab-eating macaque), this protein is L-lactate dehydrogenase A chain (LDHA).